A 357-amino-acid chain; its full sequence is Phosphoribosylformylglycinamidine cyclo-ligase (357 aa).

Belongs to the AIR synthase family.

It is found in the cytoplasm. It carries out the reaction 2-formamido-N(1)-(5-O-phospho-beta-D-ribosyl)acetamidine + ATP = 5-amino-1-(5-phospho-beta-D-ribosyl)imidazole + ADP + phosphate + H(+). The protein operates within purine metabolism; IMP biosynthesis via de novo pathway; 5-amino-1-(5-phospho-D-ribosyl)imidazole from N(2)-formyl-N(1)-(5-phospho-D-ribosyl)glycinamide: step 2/2. In Agrobacterium fabrum (strain C58 / ATCC 33970) (Agrobacterium tumefaciens (strain C58)), this protein is Phosphoribosylformylglycinamidine cyclo-ligase.